We begin with the raw amino-acid sequence, 500 residues long: Probable malate:quinone oxidoreductase (500 aa).

The protein belongs to the MQO family. FAD is required as a cofactor.

It carries out the reaction (S)-malate + a quinone = a quinol + oxaloacetate. The protein operates within carbohydrate metabolism; tricarboxylic acid cycle; oxaloacetate from (S)-malate (quinone route): step 1/1. This Bacillus thuringiensis (strain Al Hakam) protein is Probable malate:quinone oxidoreductase.